A 257-amino-acid polypeptide reads, in one-letter code: Snake venom serine protease KN10 (257 aa).

The signal sequence occupies residues 1–18 (MVLIRVLANLLILQLSYA). The propeptide occupies 19-24 (QKSSEL). The 224-residue stretch at 25–248 (VVGGDECNIN…HLDWIKSIIA (224 aa)) folds into the Peptidase S1 domain. 5 disulfides stabilise this stretch: Cys31–Cys162, Cys49–Cys65, Cys141–Cys209, Cys173–Cys188, and Cys199–Cys224. The active-site Charge relay system is the His64. Asn102 carries an N-linked (GlcNAc...) asparagine glycan. Asp109 functions as the Charge relay system in the catalytic mechanism. Asn120 and Asn121 each carry an N-linked (GlcNAc...) asparagine glycan. Residue Ser203 is the Charge relay system of the active site.

This sequence belongs to the peptidase S1 family. Snake venom subfamily. Monomer. Expressed by the venom gland.

It is found in the secreted. Snake venom serine protease that may act in the hemostasis system of the prey. The chain is Snake venom serine protease KN10 from Trimeresurus stejnegeri (Chinese green tree viper).